Consider the following 446-residue polypeptide: UDP-N-acetylmuramoylalanine--D-glutamate ligase (446 aa).

Residue glycine 112–threonine 118 coordinates ATP.

The protein belongs to the MurCDEF family.

It localises to the cytoplasm. It carries out the reaction UDP-N-acetyl-alpha-D-muramoyl-L-alanine + D-glutamate + ATP = UDP-N-acetyl-alpha-D-muramoyl-L-alanyl-D-glutamate + ADP + phosphate + H(+). It functions in the pathway cell wall biogenesis; peptidoglycan biosynthesis. In terms of biological role, cell wall formation. Catalyzes the addition of glutamate to the nucleotide precursor UDP-N-acetylmuramoyl-L-alanine (UMA). This chain is UDP-N-acetylmuramoylalanine--D-glutamate ligase, found in Baumannia cicadellinicola subsp. Homalodisca coagulata.